The following is a 117-amino-acid chain: G antigen 12I (117 aa).

Positions 1-117 are disordered; sequence MSWRGRSTYY…PEEGEKQSQC (117 aa). 2 stretches are compositionally biased toward acidic residues: residues 32–45 and 87–96; these read FSDE…EEGE and ECEDGPDGQE. The segment covering 103–117 has biased composition (basic and acidic residues); sequence EEVKTPEEGEKQSQC.

This sequence belongs to the GAGE family. As to quaternary structure, forms tetramers.

The sequence is that of G antigen 12I (GAGE12I) from Homo sapiens (Human).